A 257-amino-acid chain; its full sequence is Ribosomal RNA small subunit methyltransferase J (257 aa).

S-adenosyl-L-methionine is bound by residues 109–110 (RD), 125–126 (ER), and aspartate 179.

It belongs to the methyltransferase superfamily. RsmJ family.

It localises to the cytoplasm. The enzyme catalyses guanosine(1516) in 16S rRNA + S-adenosyl-L-methionine = N(2)-methylguanosine(1516) in 16S rRNA + S-adenosyl-L-homocysteine + H(+). Functionally, specifically methylates the guanosine in position 1516 of 16S rRNA. The sequence is that of Ribosomal RNA small subunit methyltransferase J from Actinobacillus succinogenes (strain ATCC 55618 / DSM 22257 / CCUG 43843 / 130Z).